A 319-amino-acid chain; its full sequence is Aspartate carbamoyltransferase catalytic subunit (319 aa).

2 residues coordinate carbamoyl phosphate: Arg65 and Thr66. Lys93 serves as a coordination point for L-aspartate. Carbamoyl phosphate-binding residues include Arg115, His149, and Gln152. L-aspartate-binding residues include Arg182 and Arg237. 2 residues coordinate carbamoyl phosphate: Gly278 and Pro279.

The protein belongs to the aspartate/ornithine carbamoyltransferase superfamily. ATCase family. In terms of assembly, heterododecamer (2C3:3R2) of six catalytic PyrB chains organized as two trimers (C3), and six regulatory PyrI chains organized as three dimers (R2).

It carries out the reaction carbamoyl phosphate + L-aspartate = N-carbamoyl-L-aspartate + phosphate + H(+). The protein operates within pyrimidine metabolism; UMP biosynthesis via de novo pathway; (S)-dihydroorotate from bicarbonate: step 2/3. Catalyzes the condensation of carbamoyl phosphate and aspartate to form carbamoyl aspartate and inorganic phosphate, the committed step in the de novo pyrimidine nucleotide biosynthesis pathway. The chain is Aspartate carbamoyltransferase catalytic subunit from Azoarcus sp. (strain BH72).